The sequence spans 408 residues: Putative transporter AmpG 2 (408 aa).

The next 12 helical transmembrane spans lie at 10–30 (YISNIFFILIISFPGGLIYLL), 49–69 (IGLFSLVNFIHIFKFLWGPLL), 84–104 (YCLIIALVSCICCVYILTNFN), 109–129 (FIPFALCLVAVAFFSSIYDML), 154–174 (FRIGILIAGSGALYLSTIISW), 177–197 (VYRSMAILCIPSLLLIIIYPL), 224–244 (WLIIVSFMLLYRLQDNFLSIM), 261–281 (LGYKAFGMCAAILGGFIGGFL), 294–311 (ALIYHALSSLSFLFLYFY), 315–337 (ITSLYIAVFFQEFTKGLTMSPFF), 353–373 (IALITSIAYISTILFGSISGY), and 378–398 (LGWTYFFLVAGFCFIPAYILI).

The protein belongs to the major facilitator superfamily.

The protein resides in the cell inner membrane. This Rickettsia felis (strain ATCC VR-1525 / URRWXCal2) (Rickettsia azadi) protein is Putative transporter AmpG 2 (ampG2).